Here is a 169-residue protein sequence, read N- to C-terminus: Crossover junction endodeoxyribonuclease RuvC (169 aa).

Active-site residues include aspartate 12, glutamate 72, and aspartate 144. The Mg(2+) site is built by aspartate 12, glutamate 72, and aspartate 144.

Belongs to the RuvC family. In terms of assembly, homodimer which binds Holliday junction (HJ) DNA. The HJ becomes 2-fold symmetrical on binding to RuvC with unstacked arms; it has a different conformation from HJ DNA in complex with RuvA. In the full resolvosome a probable DNA-RuvA(4)-RuvB(12)-RuvC(2) complex forms which resolves the HJ. Requires Mg(2+) as cofactor.

The protein localises to the cytoplasm. The catalysed reaction is Endonucleolytic cleavage at a junction such as a reciprocal single-stranded crossover between two homologous DNA duplexes (Holliday junction).. Functionally, the RuvA-RuvB-RuvC complex processes Holliday junction (HJ) DNA during genetic recombination and DNA repair. Endonuclease that resolves HJ intermediates. Cleaves cruciform DNA by making single-stranded nicks across the HJ at symmetrical positions within the homologous arms, yielding a 5'-phosphate and a 3'-hydroxyl group; requires a central core of homology in the junction. The consensus cleavage sequence is 5'-(A/T)TT(C/G)-3'. Cleavage occurs on the 3'-side of the TT dinucleotide at the point of strand exchange. HJ branch migration catalyzed by RuvA-RuvB allows RuvC to scan DNA until it finds its consensus sequence, where it cleaves and resolves the cruciform DNA. This chain is Crossover junction endodeoxyribonuclease RuvC, found in Azorhizobium caulinodans (strain ATCC 43989 / DSM 5975 / JCM 20966 / LMG 6465 / NBRC 14845 / NCIMB 13405 / ORS 571).